The chain runs to 85 residues: Progonadoliberin-2 (85 aa).

Residues 1–23 (MCVSRLVLLFGLLLCVGAQLSNA) form the signal peptide. Pyrrolidone carboxylic acid is present on Gln-24. Glycine amide is present on Gly-33.

Belongs to the GnRH family.

The protein localises to the secreted. In terms of biological role, stimulates the secretion of gonadotropins. This chain is Progonadoliberin-2 (gnrh2), found in Morone saxatilis (Striped bass).